The following is a 305-amino-acid chain: GTPase Era (305 aa).

In terms of domain architecture, Era-type G spans 9-176; the sequence is KSGFISIIGR…LDTLPKYLPE (168 aa). Residues 17-24 are G1; the sequence is GRPNVGKS. 17–24 is a binding site for GTP; it reads GRPNVGKS. A G2 region spans residues 43 to 47; sequence QTTRN. The G3 stretch occupies residues 64-67; the sequence is DTPG. Residues 64–68 and 126–129 contribute to the GTP site; these read DTPGI and NKID. A G4 region spans residues 126–129; it reads NKID. The G5 stretch occupies residues 155-157; it reads ISA. In terms of domain architecture, KH type-2 spans 207-286; that stretch reads TREEIPHSIA…YLELWVKVQK (80 aa).

The protein belongs to the TRAFAC class TrmE-Era-EngA-EngB-Septin-like GTPase superfamily. Era GTPase family. In terms of assembly, monomer.

It is found in the cytoplasm. It localises to the cell membrane. Its function is as follows. An essential GTPase that binds both GDP and GTP, with rapid nucleotide exchange. Plays a role in 16S rRNA processing and 30S ribosomal subunit biogenesis and possibly also in cell cycle regulation and energy metabolism. The protein is GTPase Era of Lysinibacillus sphaericus (strain C3-41).